The sequence spans 231 residues: Ribonuclease HII (231 aa).

Residues 38–227 enclose the RNase H type-2 domain; the sequence is ELVAGGDEAG…IKSFYGQLKL (190 aa). Residues Asp44, Glu45, and Asp136 each contribute to the a divalent metal cation site.

The protein belongs to the RNase HII family. Requires Mn(2+) as cofactor. It depends on Mg(2+) as a cofactor.

The protein localises to the cytoplasm. The enzyme catalyses Endonucleolytic cleavage to 5'-phosphomonoester.. Endonuclease that specifically degrades the RNA of RNA-DNA hybrids. This is Ribonuclease HII from Carboxydothermus hydrogenoformans (strain ATCC BAA-161 / DSM 6008 / Z-2901).